A 230-amino-acid chain; its full sequence is Large ribosomal subunit protein uL1 (230 aa).

Belongs to the universal ribosomal protein uL1 family. In terms of assembly, part of the 50S ribosomal subunit.

Functionally, binds directly to 23S rRNA. The L1 stalk is quite mobile in the ribosome, and is involved in E site tRNA release. Its function is as follows. Protein L1 is also a translational repressor protein, it controls the translation of the L11 operon by binding to its mRNA. The sequence is that of Large ribosomal subunit protein uL1 from Rhodopseudomonas palustris (strain BisB18).